Consider the following 285-residue polypeptide: Ribosomal RNA small subunit methyltransferase H (285 aa).

Residues 34–36 (AGH), Asp51, Phe75, Asp96, and His103 contribute to the S-adenosyl-L-methionine site. A disordered region spans residues 259-285 (LVPSEKEAAQNPRARSAKLRAAEKEAP).

Belongs to the methyltransferase superfamily. RsmH family.

The protein localises to the cytoplasm. The enzyme catalyses cytidine(1402) in 16S rRNA + S-adenosyl-L-methionine = N(4)-methylcytidine(1402) in 16S rRNA + S-adenosyl-L-homocysteine + H(+). Functionally, specifically methylates the N4 position of cytidine in position 1402 (C1402) of 16S rRNA. The sequence is that of Ribosomal RNA small subunit methyltransferase H from Thermus thermophilus (strain ATCC 27634 / DSM 579 / HB8).